A 120-amino-acid polypeptide reads, in one-letter code: 5-hydroxyisourate hydrolase 2 (120 aa).

3 residues coordinate substrate: His10, Arg48, and Tyr117.

It belongs to the transthyretin family. 5-hydroxyisourate hydrolase subfamily. In terms of assembly, homotetramer.

It catalyses the reaction 5-hydroxyisourate + H2O = 5-hydroxy-2-oxo-4-ureido-2,5-dihydro-1H-imidazole-5-carboxylate + H(+). Functionally, catalyzes the hydrolysis of 5-hydroxyisourate (HIU) to 2-oxo-4-hydroxy-4-carboxy-5-ureidoimidazoline (OHCU). The sequence is that of 5-hydroxyisourate hydrolase 2 from Rhizobium meliloti (strain 1021) (Ensifer meliloti).